Consider the following 126-residue polypeptide: Cytochrome c2 (126 aa).

The heme c site is built by Cys17, Cys20, His21, and Met101.

The protein belongs to the cytochrome c family. In terms of processing, binds 1 heme c group covalently per subunit.

Its subcellular location is the periplasm. Cytochrome c2 is found mainly in purple, non-sulfur, photosynthetic bacteria where it functions as the electron donor to the oxidized bacteriochlorophyll in the photophosphorylation pathway. However, it may also have a role in the respiratory chain and is found in some non-photosynthetic bacteria. This chain is Cytochrome c2, found in Rhodovulum adriaticum (Rhodopseudomonas adriatica).